A 488-amino-acid polypeptide reads, in one-letter code: (S)-canadine synthase CYP719A21 (488 aa).

Residues 6 to 26 (LWILTLISTILAVFAAVLIIF) traverse the membrane as a helical segment. C432 is a heme binding site.

This sequence belongs to the cytochrome P450 family. Heme is required as a cofactor.

The protein resides in the membrane. The enzyme catalyses (S)-tetrahydrocolumbamine + reduced [NADPH--hemoprotein reductase] + O2 = (S)-canadine + oxidized [NADPH--hemoprotein reductase] + 2 H2O + H(+). It functions in the pathway alkaloid biosynthesis. Cytochrome P450 involved in the biosynthesis of the benzylisoquinoline alkaloid noscapine. Converts (S)-tetrahydrocolumbamine to (S)-canadine. The protein is (S)-canadine synthase CYP719A21 of Papaver somniferum (Opium poppy).